A 479-amino-acid chain; its full sequence is Ribulose bisphosphate carboxylase large chain (479 aa).

The propeptide occupies 1–2 (MS). Substrate contacts are provided by N123 and T173. K175 functions as the Proton acceptor in the catalytic mechanism. Residue K177 coordinates substrate. Residues K201, D203, and E204 each coordinate Mg(2+). N6-carboxylysine is present on K201. S208 is modified (phosphoserine). H294 functions as the Proton acceptor in the catalytic mechanism. Residues R295 and H327 each coordinate substrate. T330 carries the post-translational modification Phosphothreonine. A substrate-binding site is contributed by S379.

Belongs to the RuBisCO large chain family. Type I subfamily. In terms of assembly, heterohexadecamer of 8 large chains and 8 small chains; disulfide-linked. The disulfide link is formed within the large subunit homodimers. Mg(2+) is required as a cofactor. Post-translationally, the disulfide bond which can form in the large chain dimeric partners within the hexadecamer appears to be associated with oxidative stress and protein turnover.

Its subcellular location is the plastid. The protein resides in the chloroplast. The enzyme catalyses 2 (2R)-3-phosphoglycerate + 2 H(+) = D-ribulose 1,5-bisphosphate + CO2 + H2O. It carries out the reaction D-ribulose 1,5-bisphosphate + O2 = 2-phosphoglycolate + (2R)-3-phosphoglycerate + 2 H(+). Its function is as follows. RuBisCO catalyzes two reactions: the carboxylation of D-ribulose 1,5-bisphosphate, the primary event in carbon dioxide fixation, as well as the oxidative fragmentation of the pentose substrate in the photorespiration process. Both reactions occur simultaneously and in competition at the same active site. In Olimarabidopsis pumila (Dwarf rocket), this protein is Ribulose bisphosphate carboxylase large chain.